The primary structure comprises 4138 residues: Fumosorinone synthetase (4138 aa).

Residues 15 to 455 (PEPIAIVGSA…GTNAHAIIER (441 aa)) enclose the Ketosynthase family 3 (KS3) domain. Active-site for beta-ketoacyl synthase activity residues include Cys-189, His-328, and His-375. Residues 590–921 (VFTGQGAQWP…APDAVSFSTA (332 aa)) are malonyl-CoA:ACP transacylase (MAT) domain. The segment at 990–1133 (HELLGRRAVD…GLIDVHLGPR (144 aa)) is N-terminal hotdog fold. The dehydratase (DH) domain stretch occupies residues 990-1306 (HELLGRRAVD…GFEVRSVGER (317 aa)). One can recognise a PKS/mFAS DH domain in the interval 990–1309 (HELLGRRAVD…VRSVGERDAA (320 aa)). The Proton acceptor; for dehydratase activity role is filled by His-1022. The tract at residues 1157-1309 (LQEIDCEKLY…VRSVGERDAA (153 aa)) is C-terminal hotdog fold. Catalysis depends on Asp-1216, which acts as the Proton donor; for dehydratase activity. The segment at 1456–1650 (RFYAEDKGMQ…FSGADHVAHD (195 aa)) is methyltransferase (MT) domain. A ketoreductase (KR) domain region spans residues 2205–2379 (TYLMVGAAGG…AASIIHVGFV (175 aa)). The Carrier 1 domain maps to 2507–2587 (EAAAAVRRAF…QLSTLAAKLA (81 aa)). Ser-2547 is subject to O-(pantetheine 4'-phosphoryl)serine. The tract at residues 2587–2683 (ARQQSPRKEG…TEPKTEDKVS (97 aa)) is disordered. Over residues 2610-2621 (TQDKLVDDKEQK) the composition is skewed to basic and acidic residues. Residues 2622 to 2643 (VQVTSSLAKADSLTQEMQASAH) show a composition bias toward polar residues. The segment covering 2647–2659 (DSATNPTPSSTAS) has biased composition (low complexity). The segment covering 2664–2675 (SNSQSTRSTSTE) has biased composition (polar residues). The tract at residues 2701–3128 (REAPMSAAQA…ASQRVRECAV (428 aa)) is condensation (C) domain. An adenylation (A) (KR) domain region spans residues 3162–3564 (CQKNSARTAI…DGTLLCFGRI (403 aa)). One can recognise a Carrier 2 domain in the interval 3680–3759 (EKMTIQEGEL…GMTRCVLAQR (80 aa)). The residue at position 3719 (Ser-3719) is an O-(pantetheine 4'-phosphoryl)serine. Residues 3813–4045 (LTGATGFLGG…LDFGTVDAVV (233 aa)) are reductase (RED) domain.

In the C-terminal section; belongs to the NRP synthetase family.

Hybrid PKS-NRPS synthetase; part of the gene cluster that mediates the biosynthesis of fumosorinone, a 2-pyridone alkaloid that acts as an inhibitor of protein tyrosine phosphatase 1B which is implicated asa negative regulator of insulin receptor signaling and a potential drug target for the treatment of type II diabetes and other associated metabolic syndromes. The polyketide-amino acid backbone of fumosorinone is first assembled by the PKS-NRPS hybrid fumoS. The PKS modules condense one acetyl-CoA starter unit with 7 malonyl-CoA units, programmed C-methylations occurring after the first 3 and the sixth extensions, and cycles of full reduction occurring after the first 2 extensions. Because fumoS lacks a designated enoyl reductase (ER) domain, the required activity is provided the enoyl reductase fumoC. Upon formation of the polyketide backbone on the thiotemplate, the polyketide is transferred to the NRPS module and linked to tyrosine to produce the acyltetramic acid intermediate called prefumosorinone A. The cytochrome P450 monooxygenase fumoA then probably catalyzes an unprecedented oxidative ring expansion of prefumosorinone A to form prefumosorinone B which contains the 2-pyridone core of fumosorinone. The cytochrome P450 monooxygenase fumoB might hydroxylate the nitrogen of prefumosorinone B, but not the acyltetramic acid prefumosorinone A, to form fumosorinone. The polypeptide is Fumosorinone synthetase (Cordyceps fumosorosea (strain ARSEF 2679) (Isaria fumosorosea)).